Reading from the N-terminus, the 441-residue chain is Histidinol dehydrogenase homolog (441 aa).

H266 contributes to the Zn(2+) binding site. Catalysis depends on proton acceptor residues E334 and H335. H427 lines the Zn(2+) pocket.

The protein belongs to the histidinol dehydrogenase family. Requires Zn(2+) as cofactor.

This is Histidinol dehydrogenase homolog from Cereibacter sphaeroides (strain ATCC 17023 / DSM 158 / JCM 6121 / CCUG 31486 / LMG 2827 / NBRC 12203 / NCIMB 8253 / ATH 2.4.1.) (Rhodobacter sphaeroides).